The sequence spans 179 residues: uncharacterized protein (179 aa).

2 stretches are compositionally biased toward polar residues: residues 1–37 (PLGA…TNPG) and 60–70 (IPTQSTTTFRS). Disordered regions lie at residues 1–41 (PLGA…PSAK) and 60–82 (IPTQ…PGRR).

In terms of tissue distribution, component of the acid-soluble and acid-insoluble organic matrix of calcified shell layers (at protein level).

It is found in the secreted. This is an uncharacterized protein from Haliotis asinina (Donkey's ear abalone).